Consider the following 160-residue polypeptide: Oligoribonuclease (160 aa).

The 151-residue stretch at 8–158 (LIWIDLEMTG…YNKLKKKTLI (151 aa)) folds into the Exonuclease domain. Residue Tyr129 is part of the active site.

This sequence belongs to the oligoribonuclease family.

It localises to the cytoplasm. Functionally, 3'-to-5' exoribonuclease specific for small oligoribonucleotides. This chain is Oligoribonuclease (orn), found in Buchnera aphidicola subsp. Baizongia pistaciae (strain Bp).